Here is a 605-residue protein sequence, read N- to C-terminus: Probable potassium transport system protein Kup 2 (605 aa).

The next 12 helical transmembrane spans lie at 17-37 (GLVF…IMTL), 45-65 (VLGI…VEYA), 96-116 (MAFA…DGVI), 139-159 (AQGG…IFQF), 169-189 (FGPI…VSII), 211-231 (GLAG…GEAL), 246-266 (AWYF…AFIL), 286-306 (LYIP…QALI), 338-358 (IYIG…MILF), 367-387 (AYGL…TMIF), 394-414 (WKVP…TANL), and 417-437 (LPHG…IMVI).

The protein belongs to the HAK/KUP transporter (TC 2.A.72) family.

The protein resides in the cell inner membrane. It carries out the reaction K(+)(in) + H(+)(in) = K(+)(out) + H(+)(out). Functionally, transport of potassium into the cell. Likely operates as a K(+):H(+) symporter. The polypeptide is Probable potassium transport system protein Kup 2 (Geobacter sulfurreducens (strain ATCC 51573 / DSM 12127 / PCA)).